The chain runs to 283 residues: Cardiolipin synthase (CMP-forming) (283 aa).

Transmembrane regions (helical) follow at residues 83–103 (PFIG…LFAF), 155–175 (VSIA…ALFI), and 209–229 (LSKW…LLLL).

Belongs to the CDP-alcohol phosphatidyltransferase class-I family. As to quaternary structure, may be found in a large complex. The cofactor is Mg(2+).

The protein resides in the mitochondrion inner membrane. It catalyses the reaction a CDP-1,2-diacyl-sn-glycerol + a 1,2-diacyl-sn-glycero-3-phospho-(1'-sn-glycerol) = a cardiolipin + CMP + H(+). In terms of biological role, catalyzes the synthesis of cardiolipin (CL) (diphosphatidylglycerol) by specifically transferring a phosphatidyl group from CDP-diacylglycerol to phosphatidylglycerol (PG). CL is a key phospholipid in mitochondrial membranes and plays important roles in maintaining the functional integrity and dynamics of mitochondria under both optimal and stress conditions. The sequence is that of Cardiolipin synthase (CMP-forming) (CRD1) from Saccharomyces cerevisiae (strain ATCC 204508 / S288c) (Baker's yeast).